The chain runs to 416 residues: POC1 centriolar protein homolog A (416 aa).

7 WD repeats span residues 16–55, 58–97, 100–139, 142–181, 184–223, 226–265, and 268–307; these read GHRD…RAYR, GHKD…ESVL, AHTG…IICT, EHNN…LIHT, EPGG…LLQH, VHSA…LLYT, and GHQG…VDYS. The disordered stretch occupies residues 311-340; sequence QQKRDHRTPSAQASGAAGDPESRSGQKTEV. A coiled-coil region spans residues 380–412; that stretch reads QLDVLTQTVAILEQRLTLTEDKLKECLEQQHQA.

The protein belongs to the WD repeat POC1 family.

Functionally, may play an important role in centriole assembly and/or stability and ciliogenesis. The sequence is that of POC1 centriolar protein homolog A from Danio rerio (Zebrafish).